Reading from the N-terminus, the 501-residue chain is MELHNDEKRLLKAFKDSAKNIIDSEGLLEYIEKEKIMRAAFWLTGRDFLNIIEKKSKFLELTELGKNAIESGFPERKVSNYLKTNKLDSFPIKDLSKVLEKDEAGAALGNLKKKELVTIEKGNIFFKSLEYKDLEEELLKKVSLYPNLEEYSKEEILTIETLKKRGFLKLNEVTEREFEITVKGLEYIKNPIEIKEEVTQITRDLIVSGKWKEVSIRPYDAKIPTEEIYPAKAHPMSKIIEEVTEVLTSMGFSEVKSQIVQTEFWNFDTLFEPQDHPARDMQDTFFVKYPDTGIVPHELLKKVKSIHECGKIENEKISKGWCYKFDEEVSKRTVLRTHTTVSSIKYLSSLSNEEKENFHKVFCIDRVFRNETIDYKHLPEFYQCEGIIMAEDVSFNNLVGILKEFLSKLGFEKVRIRPAYFPFTEPSLEAEVYMEGKGWLELLGAGIFRPEVLEPFGIKKPVLAWGIGLSRLAMLRLGLTDIRELHKNDIEWLKKTVVIEK.

Positions 340 and 423 each coordinate L-phenylalanine. A Mg(2+)-binding site is contributed by glutamate 425. Phenylalanine 448 serves as a coordination point for L-phenylalanine.

Belongs to the class-II aminoacyl-tRNA synthetase family. Phe-tRNA synthetase alpha subunit type 2 subfamily. In terms of assembly, tetramer of two alpha and two beta subunits. The cofactor is Mg(2+).

The protein resides in the cytoplasm. The catalysed reaction is tRNA(Phe) + L-phenylalanine + ATP = L-phenylalanyl-tRNA(Phe) + AMP + diphosphate + H(+). The sequence is that of Phenylalanine--tRNA ligase alpha subunit from Methanococcus vannielii (strain ATCC 35089 / DSM 1224 / JCM 13029 / OCM 148 / SB).